The primary structure comprises 359 residues: Peroxisome assembly protein 12 (359 aa).

Residues 1-19 (MAEHGAHITTASVADDQPS) lie on the Peroxisomal matrix side of the membrane. A helical membrane pass occupies residues 20–47 (IFEVVAQDSLMTAVRPALQHVVKVLAES). Over 48 to 51 (NPAH) the chain is Cytoplasmic. A helical transmembrane segment spans residues 52 to 76 (YGFFWRWFDEIFTLLDFLLQQHYLS). Topologically, residues 77–109 (RTSASFSEHFYGLKRIVAGSSPQLQRPASAGLP) are peroxisomal matrix. A helical membrane pass occupies residues 110 to 139 (KEHLWKSAMFLVLLPYLKVKLEKLASTLRE). The Cytoplasmic segment spans residues 140–144 (EDEYS). The chain crosses the membrane as a helical span at residues 145–183 (IHPPSSHWKRFYRVFLAAYPFVTMTWEGWFLTQQLRYIL). Topologically, residues 184–249 (GKAEHHSPLL…VGGVALSLST (66 aa)) are peroxisomal matrix. Residues 250-277 (GLSVGVFFLQFLDWWYSSENQETIKSLT) form a helical membrane-spanning segment. Topologically, residues 278–359 (ALPTPPPPVH…HLIKLYSPEN (82 aa)) are cytoplasmic. The Zn(2+) site is built by Cys304, Cys307, Cys325, and Cys328. Residues 304-343 (CPLCRKARVNDTVLATSGYVFCYRCVFNYVRSHQACPITG) form an RING-type; degenerate zinc finger.

It belongs to the pex2/pex10/pex12 family. Component of the PEX2-PEX10-PEX12 retrotranslocation channel, composed of PEX2, PEX10 and PEX12. Interacts with PEX19 via its cytoplasmic domain.

The protein localises to the peroxisome membrane. It functions in the pathway protein modification; protein ubiquitination. Component of a retrotranslocation channel required for peroxisome organization by mediating export of the PEX5 receptor from peroxisomes to the cytosol, thereby promoting PEX5 recycling. The retrotranslocation channel is composed of PEX2, PEX10 and PEX12; each subunit contributing transmembrane segments that coassemble into an open channel that specifically allows the passage of PEX5 through the peroxisomal membrane. PEX12 also regulates PEX5 recycling by activating the E3 ubiquitin-protein ligase activity of PEX10. When PEX5 recycling is compromised, PEX12 stimulates PEX10-mediated polyubiquitination of PEX5, leading to its subsequent degradation. The sequence is that of Peroxisome assembly protein 12 (Pex12) from Rattus norvegicus (Rat).